Reading from the N-terminus, the 335-residue chain is Aspartate--ammonia ligase (335 aa).

It belongs to the class-II aminoacyl-tRNA synthetase family. AsnA subfamily.

It localises to the cytoplasm. It catalyses the reaction L-aspartate + NH4(+) + ATP = L-asparagine + AMP + diphosphate + H(+). Its pathway is amino-acid biosynthesis; L-asparagine biosynthesis; L-asparagine from L-aspartate (ammonia route): step 1/1. This Levilactobacillus brevis (strain ATCC 367 / BCRC 12310 / CIP 105137 / JCM 1170 / LMG 11437 / NCIMB 947 / NCTC 947) (Lactobacillus brevis) protein is Aspartate--ammonia ligase.